Consider the following 219-residue polypeptide: MSIQVFCDFDGTITNNDNIMSIMEKFAPPEAEEVKNRILSQELSIQEGVSQLFQFIPTNLHDEIIQFLIETAEIRNGFHEFIQFVNENNISFYVISGGMDFFVYPLLQGLIPKEQIYCNETDFSNEYITVNWPHPCDRLCQNHCGLCKSSLIRKLSDTNDFHIVIGDSITDLQAAKQADKVFARDFLITKCEENHISYTAFETFHDVQTELKHLLEVKL.

This sequence belongs to the HAD-like hydrolase superfamily. MtnX family.

It catalyses the reaction 2-hydroxy-5-methylsulfanyl-3-oxopent-1-enyl phosphate + H2O = 1,2-dihydroxy-5-(methylsulfanyl)pent-1-en-3-one + phosphate. The protein operates within amino-acid biosynthesis; L-methionine biosynthesis via salvage pathway; L-methionine from S-methyl-5-thio-alpha-D-ribose 1-phosphate: step 4/6. Dephosphorylates 2-hydroxy-3-keto-5-methylthiopentenyl-1-phosphate (HK-MTPenyl-1-P) yielding 1,2-dihydroxy-3-keto-5-methylthiopentene (DHK-MTPene). The protein is 2-hydroxy-3-keto-5-methylthiopentenyl-1-phosphate phosphatase of Bacillus cereus (strain AH187).